A 154-amino-acid polypeptide reads, in one-letter code: Interleukin-2 (154 aa).

The signal sequence occupies residues 1-20 (MYRMQLLSCIALSLALVTNS). O-linked (GalNAc...) threonine glycosylation is present at threonine 23. Cysteine 78 and cysteine 126 are disulfide-bonded.

Belongs to the IL-2 family.

It localises to the secreted. Cytokine produced by activated CD4-positive helper T-cells and to a lesser extend activated CD8-positive T-cells and natural killer (NK) cells that plays pivotal roles in the immune response and tolerance. Binds to a receptor complex composed of either the high-affinity trimeric IL-2R (IL2RA/CD25, IL2RB/CD122 and IL2RG/CD132) or the low-affinity dimeric IL-2R (IL2RB and IL2RG). Interaction with the receptor leads to oligomerization and conformation changes in the IL-2R subunits resulting in downstream signaling starting with phosphorylation of JAK1 and JAK3. In turn, JAK1 and JAK3 phosphorylate the receptor to form a docking site leading to the phosphorylation of several substrates including STAT5. This process leads to activation of several pathways including STAT, phosphoinositide-3-kinase/PI3K and mitogen-activated protein kinase/MAPK pathways. Functions as a T-cell growth factor and can increase NK-cell cytolytic activity as well. Promotes strong proliferation of activated B-cells and subsequently immunoglobulin production. Plays a pivotal role in regulating the adaptive immune system by controlling the survival and proliferation of regulatory T-cells, which are required for the maintenance of immune tolerance. Moreover, participates in the differentiation and homeostasis of effector T-cell subsets, including Th1, Th2, Th17 as well as memory CD8-positive T-cells. The protein is Interleukin-2 (IL2) of Cercocebus atys (Sooty mangabey).